A 210-amino-acid polypeptide reads, in one-letter code: Cytochrome c biogenesis ATP-binding export protein CcmA (210 aa).

An ABC transporter domain is found at 3–209 (LTVTNLACAR…PADDPFAGVT (207 aa)). Residue 35-42 (GPNGIGKT) coordinates ATP.

The protein belongs to the ABC transporter superfamily. CcmA exporter (TC 3.A.1.107) family. The complex is composed of two ATP-binding proteins (CcmA) and two transmembrane proteins (CcmB).

It localises to the cell inner membrane. The enzyme catalyses heme b(in) + ATP + H2O = heme b(out) + ADP + phosphate + H(+). In terms of biological role, part of the ABC transporter complex CcmAB involved in the biogenesis of c-type cytochromes; once thought to export heme, this seems not to be the case, but its exact role is uncertain. Responsible for energy coupling to the transport system. The chain is Cytochrome c biogenesis ATP-binding export protein CcmA from Cereibacter sphaeroides (strain ATCC 17023 / DSM 158 / JCM 6121 / CCUG 31486 / LMG 2827 / NBRC 12203 / NCIMB 8253 / ATH 2.4.1.) (Rhodobacter sphaeroides).